A 423-amino-acid chain; its full sequence is Enolase (423 aa).

Gln-164 is a binding site for (2R)-2-phosphoglycerate. Residue Glu-206 is the Proton donor of the active site. Mg(2+)-binding residues include Asp-243, Glu-289, and Asp-316. Residues Lys-341, Arg-370, Ser-371, and Lys-392 each contribute to the (2R)-2-phosphoglycerate site. The Proton acceptor role is filled by Lys-341.

The protein belongs to the enolase family. Mg(2+) is required as a cofactor.

It localises to the cytoplasm. The protein localises to the secreted. It is found in the cell surface. The catalysed reaction is (2R)-2-phosphoglycerate = phosphoenolpyruvate + H2O. Its pathway is carbohydrate degradation; glycolysis; pyruvate from D-glyceraldehyde 3-phosphate: step 4/5. In terms of biological role, catalyzes the reversible conversion of 2-phosphoglycerate (2-PG) into phosphoenolpyruvate (PEP). It is essential for the degradation of carbohydrates via glycolysis. The chain is Enolase from Desulfotalea psychrophila (strain LSv54 / DSM 12343).